A 193-amino-acid chain; its full sequence is Epididymal-specific lipocalin-12 (193 aa).

The first 19 residues, Met-1–Gly-19, serve as a signal peptide directing secretion. An intrachain disulfide couples Cys-88 to Cys-193. N-linked (GlcNAc...) asparagine glycosylation is found at Asn-143 and Asn-172.

It belongs to the calycin superfamily. Lipocalin family. In terms of assembly, monomer.

Its subcellular location is the secreted. Binds all-trans retinoic acid and may act as a retinoid carrier protein within the epididymis. May play a role in male fertility. This chain is Epididymal-specific lipocalin-12 (Lcn12), found in Rattus norvegicus (Rat).